We begin with the raw amino-acid sequence, 82 residues long: Opistoporin-1 (82 aa).

The N-terminal stretch at Met-1 to Gly-22 is a signal peptide. Residues Glu-67–Glu-82 constitute a propeptide that is removed on maturation.

In terms of tissue distribution, expressed by the venom gland.

It localises to the secreted. Its subcellular location is the target cell membrane. In terms of biological role, at high concentrations, acts as a pore former in cellular membranes and causes the leakage of the cells. At submicromolar concentrations, degranulates granulocytes and has a weak hemolytic activity against human erythrocytes. Also strongly inhibits the production of superoxide anions. Has a strong antibacterial activity against Gram-negative bacteria but is less active against Gram-positive bacteria. Also has antifungal activity. The protein is Opistoporin-1 of Opistophthalmus carinatus (African yellow leg scorpion).